Here is a 363-residue protein sequence, read N- to C-terminus: Ribosomal RNA large subunit methyltransferase M (363 aa).

S-adenosyl-L-methionine contacts are provided by residues S194, 227–230, D246, D266, and D284; that span reads CPGG. K313 functions as the Proton acceptor in the catalytic mechanism.

Belongs to the class I-like SAM-binding methyltransferase superfamily. RNA methyltransferase RlmE family. RlmM subfamily. Monomer.

Its subcellular location is the cytoplasm. The catalysed reaction is cytidine(2498) in 23S rRNA + S-adenosyl-L-methionine = 2'-O-methylcytidine(2498) in 23S rRNA + S-adenosyl-L-homocysteine + H(+). Functionally, catalyzes the 2'-O-methylation at nucleotide C2498 in 23S rRNA. This Mannheimia succiniciproducens (strain KCTC 0769BP / MBEL55E) protein is Ribosomal RNA large subunit methyltransferase M.